A 231-amino-acid chain; its full sequence is Cysteine-rich venom protein VAR10 (231 aa).

An N-terminal signal peptide occupies residues 1–19 (MILLKLYLTLAAILCQSRG). Positions 41–169 (NKHNDLRRTV…SLKYFQVCQY (129 aa)) constitute an SCP domain. Cystine bridges form between C77–C156, C95–C170, C151–C167, C189–C196, and C214–C231. The 27-residue stretch at 205–231 (CAYNDDYTSCPDLTKQVGCHHPVTANC) folds into the ShKT domain.

Belongs to the CRISP family. Post-translationally, contains 8 disulfide bonds. Expressed by the venom gland.

It is found in the secreted. In terms of biological role, blocks ryanodine receptors, and potassium channels. The sequence is that of Cysteine-rich venom protein VAR10 from Varanus varius (Lace monitor lizard).